The primary structure comprises 363 residues: Phospho-N-acetylmuramoyl-pentapeptide-transferase (363 aa).

A run of 10 helical transmembrane segments spans residues 15–33 (FTTL…SFIF), 82–102 (NTPT…LLIV), 106–126 (FYSM…IIGF), 147–167 (FILQ…NGYI), 183–203 (IVIF…VNLT), 207–227 (DGLA…EIFI), 233–253 (LIIY…FLKF), 260–280 (IFMG…ISIL), 285–305 (FTLF…IIQV), and 341–361 (IVEN…VLKI).

Belongs to the glycosyltransferase 4 family. MraY subfamily. Mg(2+) is required as a cofactor.

The protein resides in the cell inner membrane. It catalyses the reaction UDP-N-acetyl-alpha-D-muramoyl-L-alanyl-gamma-D-glutamyl-meso-2,6-diaminopimeloyl-D-alanyl-D-alanine + di-trans,octa-cis-undecaprenyl phosphate = di-trans,octa-cis-undecaprenyl diphospho-N-acetyl-alpha-D-muramoyl-L-alanyl-D-glutamyl-meso-2,6-diaminopimeloyl-D-alanyl-D-alanine + UMP. The protein operates within cell wall biogenesis; peptidoglycan biosynthesis. Functionally, catalyzes the initial step of the lipid cycle reactions in the biosynthesis of the cell wall peptidoglycan: transfers peptidoglycan precursor phospho-MurNAc-pentapeptide from UDP-MurNAc-pentapeptide onto the lipid carrier undecaprenyl phosphate, yielding undecaprenyl-pyrophosphoryl-MurNAc-pentapeptide, known as lipid I. In Prochlorococcus marinus (strain MIT 9515), this protein is Phospho-N-acetylmuramoyl-pentapeptide-transferase.